The following is a 1477-amino-acid chain: Lysine-specific demethylase rbr-2 (1477 aa).

The disordered stretch occupies residues 1–37; the sequence is MRARRQENSISTPSAPSTSTSPRKKASIGNSRSKNHG. Residues 9 to 21 are compositionally biased toward low complexity; sequence SISTPSAPSTSTS. The JmjN domain maps to 56–97; sequence APIYYPTEEEFSDPIEYVAKIRHEAEKFGVVKIVPPANFKPP. Residues 121–218 enclose the ARID domain; sequence VKEKHTFIDR…HIEPFNRNLK (98 aa). Residues 222-314 are disordered; it reads MKNDDESDDE…KAEGDDDDDE (93 aa). A compositionally biased stretch (basic and acidic residues) spans 246-259; the sequence is MRTEIEVPNDKTTE. 2 stretches are compositionally biased toward basic residues: residues 272–283 and 295–304; these read GRRRSKNKKASS and NSTRGRKNKK. Residues 319-371 form a PHD-type 1 zinc finger; the sequence is QVFCVACNEGKDEDLLLLCDIDGCNNGRHTYCCDPVLDEVPEGEWRCPKCIES. The region spanning 468 to 634 is the JmjC domain; sequence QYASHAWNLN…KGRECVESYS (167 aa). Histidine 514, aspartate 517, and histidine 602 together coordinate Fe cation. A coiled-coil region spans residues 874–926; it reads IIDKLEKWMEQVEMWRNRAKDAIYREQEYSKEEIEKIIEEGDEYDIKLEEIDE. Residues 1203–1257 form a PHD-type 2 zinc finger; it reads LEACSCLGFNKSDDSESTLTCIMCDSEFHVRCCEWSPFLEKLPEGCFLCVRCLRG. Positions 1375–1404 are disordered; sequence TAKRKRPSVSHKETSKKSRKRQSQASPSEY. A PHD-type 3 zinc finger spans residues 1411–1466; it reads FKSCQARACLKPYGDSVNWVMCEAGCKNWFHVICLGFTLREINDMHEYRCSSCLDH.

Belongs to the JARID1 histone demethylase family. Requires Fe(2+) as cofactor.

It is found in the nucleus. It carries out the reaction N(6),N(6),N(6)-trimethyl-L-lysyl(4)-[histone H3] + 3 2-oxoglutarate + 3 O2 = L-lysyl(4)-[histone H3] + 3 formaldehyde + 3 succinate + 3 CO2. Histone demethylase that specifically demethylates 'Lys-4' of histone H3, thereby playing a central role in histone code. Does not demethylate histone H3 'Lys-9', H3 'Lys-27', H3 'Lys-36', H3 'Lys-79' or H4 'Lys-20'. Demethylates trimethylated and dimethylated but not monomethylated H3 'Lys-4'. Required for normal longevity of the soma in a germline-dependent manner. Implicated in the epigenetic inheritance of lifespan over several generations. Involved in larval development and vulva formation. The sequence is that of Lysine-specific demethylase rbr-2 (rbr-2) from Caenorhabditis elegans.